The primary structure comprises 207 residues: Ribosomal RNA small subunit methyltransferase G (207 aa).

Residues Gly-73, Leu-78, 124-125 (VE), and Arg-139 contribute to the S-adenosyl-L-methionine site.

It belongs to the methyltransferase superfamily. RNA methyltransferase RsmG family.

The protein resides in the cytoplasm. The catalysed reaction is guanosine(527) in 16S rRNA + S-adenosyl-L-methionine = N(7)-methylguanosine(527) in 16S rRNA + S-adenosyl-L-homocysteine. Specifically methylates the N7 position of guanine in position 527 of 16S rRNA. The polypeptide is Ribosomal RNA small subunit methyltransferase G (Salmonella schwarzengrund (strain CVM19633)).